The following is a 277-amino-acid chain: Caspase-3 (277 aa).

Residue M1 is modified to N-acetylmethionine. 2 propeptides span residues 1 to 9 (MENTENSVD) and 10 to 28 (SKSIKNSEPKIIHGSKSVD). A compositionally biased stretch (polar residues) spans 1-10 (MENTENSVDS). A disordered region spans residues 1–25 (MENTENSVDSKSIKNSEPKIIHGSK). K11 is subject to N6-acetyllysine. Residues 11–20 (KSIKNSEPKI) are compositionally biased toward basic and acidic residues. A Phosphoserine modification is found at S26. Active-site residues include H121 and C163. S-nitrosocysteine; in inhibited form is present on C163.

The protein belongs to the peptidase C14A family. As to quaternary structure, heterotetramer that consists of two anti-parallel arranged heterodimers, each one formed by a 17 kDa (p17) and a 12 kDa (p12) subunit. Interacts with BIRC6/bruce. In terms of processing, cleavage by granzyme B, caspase-6, caspase-8 and caspase-10 generates the two active subunits. Additional processing of the propeptides is likely due to the autocatalytic activity of the activated protease. Active heterodimers between the small subunit of caspase-7 protease and the large subunit of caspase-3 also occur and vice versa. Post-translationally, S-nitrosylated on its catalytic site cysteine in unstimulated cell lines and denitrosylated upon activation of the Fas apoptotic pathway, associated with an increase in intracellular caspase activity. Fas therefore activates caspase-3 not only by inducing the cleavage of the caspase zymogen to its active subunits, but also by stimulating the denitrosylation of its active site thiol. Ubiquitinated by BIRC6; this activity is inhibited by DIABLO/SMAC.

Its subcellular location is the cytoplasm. The catalysed reaction is Strict requirement for an Asp residue at positions P1 and P4. It has a preferred cleavage sequence of Asp-Xaa-Xaa-Asp-|- with a hydrophobic amino-acid residue at P2 and a hydrophilic amino-acid residue at P3, although Val or Ala are also accepted at this position.. Its activity is regulated as follows. Inhibited by BIRC6; following inhibition of BIRC6-caspase binding by DIABLO/SMAC, BIRC6 is subjected to caspase cleavage, leading to an increase in active caspases. Its function is as follows. Involved in the activation cascade of caspases responsible for apoptosis execution. At the onset of apoptosis, it proteolytically cleaves poly(ADP-ribose) polymerase PARP1 at a '216-Asp-|-Gly-217' bond. Cleaves and activates sterol regulatory element binding proteins (SREBPs) between the basic helix-loop-helix leucine zipper domain and the membrane attachment domain. Cleaves and activates caspase-6, -7 and -9 (CASP6, CASP7 and CASP9, respectively). Cleaves and inactivates interleukin-18 (IL18). Triggers cell adhesion in sympathetic neurons through RET cleavage. Cleaves IL-1 beta between an Asp and an Ala, releasing the mature cytokine which is involved in a variety of inflammatory processes. Cleaves and inhibits serine/threonine-protein kinase AKT1 in response to oxidative stress. Acts as an inhibitor of type I interferon production during virus-induced apoptosis by mediating cleavage of antiviral proteins CGAS, IRF3 and MAVS, thereby preventing cytokine overproduction. Also involved in pyroptosis by mediating cleavage and activation of gasdermin-E (GSDME). Cleaves XRCC4 and phospholipid scramblase proteins XKR4, XKR8 and XKR9, leading to promote phosphatidylserine exposure on apoptotic cell surface. Cleaves BIRC6 following inhibition of BIRC6-caspase binding by DIABLO/SMAC. The protein is Caspase-3 (CASP3) of Saimiri boliviensis boliviensis (Bolivian squirrel monkey).